Here is a 660-residue protein sequence, read N- to C-terminus: Iron(3+)-hydroxamate import system permease protein FhuB (660 aa).

18 helical membrane-spanning segments follow: residues Ile-5–Trp-25, Leu-62–Val-82, Leu-93–Gly-113, Gln-118–Gly-138, Ile-147–Phe-167, Gln-197–Leu-217, Ala-240–Phe-260, Leu-277–Trp-297, Met-303–Leu-323, Leu-348–Phe-368, Trp-391–Ile-411, Val-424–Gly-444, Phe-447–Ile-467, Met-479–Ala-499, Gly-528–Leu-548, Ile-567–Leu-587, Met-607–Cys-627, and Phe-635–Leu-655.

The protein belongs to the binding-protein-dependent transport system permease family. FecCD subfamily. As to quaternary structure, the complex is composed of two ATP-binding proteins (FhuC), a transmembrane protein (FhuB) and a solute-binding protein (FhuD). FhuB interacts with FhuC. FhuB interacts with FhuD. FhuB binds substrate-loaded FhuD more strongly than FhuD alone.

Its subcellular location is the cell inner membrane. Part of the ABC transporter complex FhuCDB involved in iron(3+)-hydroxamate import. Responsible for the translocation of the substrate across the membrane. In Escherichia coli (strain K12), this protein is Iron(3+)-hydroxamate import system permease protein FhuB (fhuB).